The sequence spans 96 residues: Large ribosomal subunit protein uL23 (96 aa).

It belongs to the universal ribosomal protein uL23 family. Part of the 50S ribosomal subunit. Contacts protein L29, and trigger factor when it is bound to the ribosome.

In terms of biological role, one of the early assembly proteins it binds 23S rRNA. One of the proteins that surrounds the polypeptide exit tunnel on the outside of the ribosome. Forms the main docking site for trigger factor binding to the ribosome. The polypeptide is Large ribosomal subunit protein uL23 (Caldicellulosiruptor saccharolyticus (strain ATCC 43494 / DSM 8903 / Tp8T 6331)).